A 333-amino-acid chain; its full sequence is S-adenosylmethionine-dependent nucleotide dehydratase (333 aa).

The region spanning 1-239 (MNIKTIVINW…SAPQKQNNVI (239 aa)) is the Radical SAM core domain. Residues cysteine 16, cysteine 20, and cysteine 23 each coordinate [4Fe-4S] cluster.

The protein belongs to the radical SAM superfamily. Viperin family. Requires [4Fe-4S] cluster as cofactor.

The catalysed reaction is GTP + AH2 + S-adenosyl-L-methionine = 3'-deoxy-3',4'-didehydro-GTP + 5'-deoxyadenosine + L-methionine + A + H2O + H(+). Functionally, expression of pVip56 in E.coli (strain MG1655) confers resistance to phage P1; has no effect against T7. Catalyzes the conversion of guanosine triphosphate (GTP) to 3'-deoxy-3',4'-didehydro-GTP (ddhGTP), probably via a SAM-dependent radical mechanism. The modified nucleotide represses transcription from T7 RNA polymerase-directed genes (possibly by acting as chain terminators), strongly suggesting these nucleotides block viral polymerase transcription. How this protein allows bacteria to resist viruses that do not encode their own RNA polymerase (such as lambda, P1) is unknown. The sequence is that of S-adenosylmethionine-dependent nucleotide dehydratase from Fibrobacter sp. (strain UWH6).